A 428-amino-acid chain; its full sequence is Growth/differentiation factor 2 (428 aa).

Residues 1-22 form the signal peptide; that stretch reads MSPGAFRVALLPLFLLVCVTQQ. The propeptide occupies 23-318; sequence KPLQNWEQAS…VGPLLARRKR (296 aa). 2 N-linked (GlcNAc...) asparagine glycosylation sites follow: Asn70 and Asn135. The cysteines at positions 155 and 236 are disulfide-linked. The N-linked (GlcNAc...) asparagine glycan is linked to Asn262. Disulfide bonds link Cys326–Cys392, Cys355–Cys425, and Cys359–Cys427. Positions 401–415 are interaction with ENG; it reads SILYKDDMGVPTLKY.

It belongs to the TGF-beta family. Homodimer; disulfide-linked. Detected in extracellular fluid as mature homodimer, and in complex with its propeptide. Interacts with ACVRL1, BMPR2 and ACVR2B with high affinity (in vitro). Identified in a complex with ACVRL1 and ACVR2B. Has ten times lower affinity for ACVR2A (in vitro). Interacts with ENG, forming a heterotetramer with a 2:2 stoichiometry. Can form a heteromeric complex with ENG and ACVRL1. Interacts with type I receptor ACVR1. In terms of processing, a reversible disulfide bond can be formed between the two subunits in the homodimer; this has no effect on GDF2 activity.

Its subcellular location is the secreted. Potent circulating inhibitor of angiogenesis. Signals through the type I activin receptor ACVRL1 but not other Alks. Signaling through SMAD1 in endothelial cells requires TGF-beta coreceptor endoglin/ENG. In Mus musculus (Mouse), this protein is Growth/differentiation factor 2 (Gdf2).